A 95-amino-acid chain; its full sequence is Bombyxin C-2 (95 aa).

Positions 1-19 (MKLVILLVVVSAMLVLGGA) are cleaved as a signal peptide. Glutamine 20 is modified (pyrrolidone carboxylic acid). 3 disulfide bridges follow: cysteine 27-cysteine 76, cysteine 39-cysteine 89, and cysteine 75-cysteine 80. Positions 47-67 (SGSQYAGYGWPWLPPFSSSRG) are cleaved as a propeptide — c peptide like.

Belongs to the insulin family. Heterodimer of a B chain and an A chain linked by two disulfide bonds.

Its subcellular location is the secreted. Its function is as follows. Brain peptide responsible for activation of prothoracic glands to produce ecdysone in insects. This Bombyx mori (Silk moth) protein is Bombyxin C-2 (BBXC2).